A 635-amino-acid chain; its full sequence is Threonine--tRNA ligase (635 aa).

The 61-residue stretch at 1–61 (MVSIRLPDGS…DHDVALAIVT (61 aa)) folds into the TGS domain. The tract at residues 242-533 (DHRKLGKQLD…LIEHHAGAMP (292 aa)) is catalytic. Cysteine 333, histidine 384, and histidine 510 together coordinate Zn(2+).

It belongs to the class-II aminoacyl-tRNA synthetase family. Homodimer. The cofactor is Zn(2+).

The protein localises to the cytoplasm. The catalysed reaction is tRNA(Thr) + L-threonine + ATP = L-threonyl-tRNA(Thr) + AMP + diphosphate + H(+). Catalyzes the attachment of threonine to tRNA(Thr) in a two-step reaction: L-threonine is first activated by ATP to form Thr-AMP and then transferred to the acceptor end of tRNA(Thr). Also edits incorrectly charged L-seryl-tRNA(Thr). In Paraburkholderia phytofirmans (strain DSM 17436 / LMG 22146 / PsJN) (Burkholderia phytofirmans), this protein is Threonine--tRNA ligase.